We begin with the raw amino-acid sequence, 95 residues long: Putative per-hexamer repeat protein 4 (95 aa).

The sequence is that of Putative per-hexamer repeat protein 4 (Phxr4) from Mus musculus (Mouse).